The sequence spans 89 residues: Small ribosomal subunit protein uS15 (89 aa).

It belongs to the universal ribosomal protein uS15 family. In terms of assembly, part of the 30S ribosomal subunit. Forms a bridge to the 50S subunit in the 70S ribosome, contacting the 23S rRNA.

Functionally, one of the primary rRNA binding proteins, it binds directly to 16S rRNA where it helps nucleate assembly of the platform of the 30S subunit by binding and bridging several RNA helices of the 16S rRNA. Its function is as follows. Forms an intersubunit bridge (bridge B4) with the 23S rRNA of the 50S subunit in the ribosome. In Corynebacterium glutamicum (strain R), this protein is Small ribosomal subunit protein uS15.